We begin with the raw amino-acid sequence, 388 residues long: Succinate--CoA ligase [ADP-forming] subunit beta (388 aa).

Positions 9–244 constitute an ATP-grasp domain; the sequence is KSLFAEYGLP…PSQDDAREAH (236 aa). ATP-binding positions include Lys-46, 53-55, Glu-99, Thr-102, and Glu-107; that span reads GRG. Mg(2+)-binding residues include Asn-199 and Asp-213. Residues Asn-264 and 321–323 contribute to the substrate site; that span reads GIV.

Belongs to the succinate/malate CoA ligase beta subunit family. In terms of assembly, heterotetramer of two alpha and two beta subunits. Requires Mg(2+) as cofactor.

It catalyses the reaction succinate + ATP + CoA = succinyl-CoA + ADP + phosphate. The enzyme catalyses GTP + succinate + CoA = succinyl-CoA + GDP + phosphate. It functions in the pathway carbohydrate metabolism; tricarboxylic acid cycle; succinate from succinyl-CoA (ligase route): step 1/1. Functionally, succinyl-CoA synthetase functions in the citric acid cycle (TCA), coupling the hydrolysis of succinyl-CoA to the synthesis of either ATP or GTP and thus represents the only step of substrate-level phosphorylation in the TCA. The beta subunit provides nucleotide specificity of the enzyme and binds the substrate succinate, while the binding sites for coenzyme A and phosphate are found in the alpha subunit. This is Succinate--CoA ligase [ADP-forming] subunit beta from Shewanella sp. (strain MR-4).